Reading from the N-terminus, the 150-residue chain is Large ribosomal subunit protein bL9 (150 aa).

This sequence belongs to the bacterial ribosomal protein bL9 family.

Its function is as follows. Binds to the 23S rRNA. This Lactiplantibacillus plantarum (strain ATCC BAA-793 / NCIMB 8826 / WCFS1) (Lactobacillus plantarum) protein is Large ribosomal subunit protein bL9.